The following is an 828-amino-acid chain: DNA gyrase subunit A (828 aa).

Residues 32-497 (LPDVRDGLKP…EVLSLEDEDL (466 aa)) enclose the Topo IIA-type catalytic domain. The active-site O-(5'-phospho-DNA)-tyrosine intermediate is Tyr120. A GyrA-box motif is present at residues 524–530 (QKRGGRG).

It belongs to the type II topoisomerase GyrA/ParC subunit family. As to quaternary structure, heterotetramer, composed of two GyrA and two GyrB chains. In the heterotetramer, GyrA contains the active site tyrosine that forms a transient covalent intermediate with DNA, while GyrB binds cofactors and catalyzes ATP hydrolysis.

The protein localises to the cytoplasm. It catalyses the reaction ATP-dependent breakage, passage and rejoining of double-stranded DNA.. A type II topoisomerase that negatively supercoils closed circular double-stranded (ds) DNA in an ATP-dependent manner to modulate DNA topology and maintain chromosomes in an underwound state. Negative supercoiling favors strand separation, and DNA replication, transcription, recombination and repair, all of which involve strand separation. Also able to catalyze the interconversion of other topological isomers of dsDNA rings, including catenanes and knotted rings. Type II topoisomerases break and join 2 DNA strands simultaneously in an ATP-dependent manner. In Streptococcus pyogenes serotype M3 (strain ATCC BAA-595 / MGAS315), this protein is DNA gyrase subunit A.